The sequence spans 84 residues: Transmembrane protein EP84R (84 aa).

A run of 2 helical transmembrane segments spans residues 31–51 (VIGV…IIIL) and 60–80 (AASI…FLIY).

It belongs to the asfivirus EP84R family.

It localises to the virion membrane. The polypeptide is Transmembrane protein EP84R (Ornithodoros (relapsing fever ticks)).